Here is a 366-residue protein sequence, read N- to C-terminus: Growth hormone secretagogue receptor type 1 (366 aa).

Residues 1–40 (MWNATPSEEPGSNLTRAELGWDAPPGNDSLADELLQLFPA) are Extracellular-facing. N-linked (GlcNAc...) asparagine glycans are attached at residues asparagine 13 and asparagine 27. Residues 41–66 (PLLAGVTATCVALFVVGIAGNLLTML) form a helical membrane-spanning segment. Over 67–72 (VVSRFR) the chain is Cytoplasmic. A helical transmembrane segment spans residues 73–96 (ELRTTTNLYLSSMAFSDLLIFLCM). Topologically, residues 97 to 117 (PLDLVRLWQYRPWNFGDLLCK) are extracellular. Residues cysteine 116 and cysteine 198 are joined by a disulfide bond. Residues 118-139 (LFQFVSESCTYATVLTITALSV) form a helical membrane-spanning segment. At 140-162 (ERYFAICFPLRAKVVVTKGRVKL) the chain is on the cytoplasmic side. Residues 163–183 (VILVIWALAFCSAGPIFVLVG) form a helical membrane-spanning segment. Residues 184-211 (VEHENGTDPQDTNECRATEFAVRSGLLT) lie on the Extracellular side of the membrane. Asparagine 188 carries an N-linked (GlcNAc...) asparagine glycan. A helical membrane pass occupies residues 212 to 235 (IMVWVSSVFFFLPVFCLTVLYSLI). Residues 236-263 (GRKLWRRKRGDGAVGSSLRDQNHRQTVK) are Cytoplasmic-facing. The chain crosses the membrane as a helical span at residues 264-285 (MLAVVVFAFILCWLPFHVGRYL). The Extracellular segment spans residues 286 to 302 (FSKSFEPGSLEIAQISQ). The helical transmembrane segment at 303–326 (YCNLVSFVLFYLSAAINPILYNIM) threads the bilayer. At 327-366 (SKKYRVAVFKLLGFEPFSQRKLSTLKDESSRAWTKSSINT) the chain is on the cytoplasmic side.

Belongs to the G-protein coupled receptor 1 family.

The protein resides in the cell membrane. Functionally, receptor for ghrelin, coupled to G-alpha-11 proteins. Stimulates growth hormone secretion. Also binds other growth hormone releasing peptides (GHRP) (e.g. Met-enkephalin and GHRP-6) as well as non-peptide, low molecular weight secretagogues (e.g. L-692,429, MK-0677, adenosine). This is Growth hormone secretagogue receptor type 1 (GHSR) from Oryctolagus cuniculus (Rabbit).